The following is a 308-amino-acid chain: Nuclear transcription factor Y subunit A-5 (308 aa).

Residues 1 to 10 (MQVFQRKEDS) are compositionally biased toward basic and acidic residues. Disordered regions lie at residues 1 to 26 (MQVF…IQGS) and 49 to 71 (GLQL…GGGE). Polar residues predominate over residues 11-26 (SWGNSMPTTNSNIQGS). The short motif at 181-204 (FVNAKQYHAILRRRKHRAKLEAQN) is the Subunit association domain (SAD) element. Positions 211–236 (KPYLHESRHLHALKRARGSGGRFLNT) form a DNA-binding region, NFYA/HAP2-type. The tract at residues 251 to 273 (MANGQNFSMSPHGGGSGIGSSSI) is disordered.

Belongs to the NFYA/HAP2 subunit family. As to quaternary structure, heterotrimeric transcription factor composed of three components, NF-YA, NF-YB and NF-YC. NF-YB and NF-YC must interact and dimerize for NF-YA association and DNA binding. Expressed in the whole plant, except roots. Present in etiolated seedlings.

The protein localises to the nucleus. In terms of biological role, stimulates the transcription of various genes by recognizing and binding to a CCAAT motif in promoters. Involved in the blue light (BL) and abscisic acid (ABA) signaling pathways. This Arabidopsis thaliana (Mouse-ear cress) protein is Nuclear transcription factor Y subunit A-5 (NFYA5).